Reading from the N-terminus, the 457-residue chain is F-box only protein 13 (457 aa).

One can recognise an F-box domain in the interval 64–110 (EFPMDDLNDDVLERVLSWLPTSCFFRMSSVCKRWKSSQTSKSFKLAC).

The polypeptide is F-box only protein 13 (FBX13) (Arabidopsis thaliana (Mouse-ear cress)).